Consider the following 130-residue polypeptide: Small ribosomal subunit protein uS9 (130 aa).

This sequence belongs to the universal ribosomal protein uS9 family.

In Xanthomonas axonopodis pv. citri (strain 306), this protein is Small ribosomal subunit protein uS9.